We begin with the raw amino-acid sequence, 479 residues long: ATP synthase subunit beta, chloroplastic (479 aa).

Residue 156–163 (GGAGVGKT) participates in ATP binding.

Belongs to the ATPase alpha/beta chains family. As to quaternary structure, F-type ATPases have 2 components, CF(1) - the catalytic core - and CF(0) - the membrane proton channel. CF(1) has five subunits: alpha(3), beta(3), gamma(1), delta(1), epsilon(1). CF(0) has four main subunits: a(1), b(1), b'(1) and c(9-12).

The protein localises to the plastid. It is found in the chloroplast thylakoid membrane. It catalyses the reaction ATP + H2O + 4 H(+)(in) = ADP + phosphate + 5 H(+)(out). In terms of biological role, produces ATP from ADP in the presence of a proton gradient across the membrane. The catalytic sites are hosted primarily by the beta subunits. This chain is ATP synthase subunit beta, chloroplastic, found in Trichomanes davallioides (Kilau fern).